The chain runs to 232 residues: 2,3-bisphosphoglycerate-dependent phosphoglycerate mutase (232 aa).

Residues 10 to 17, 23 to 24, R62, 89 to 92, K100, 116 to 117, and 186 to 187 each bind substrate; these read RHGESQWN, TG, ERHY, RR, and GN. H11 (tele-phosphohistidine intermediate) is an active-site residue. E89 functions as the Proton donor/acceptor in the catalytic mechanism.

The protein belongs to the phosphoglycerate mutase family. BPG-dependent PGAM subfamily. As to quaternary structure, homodimer.

The enzyme catalyses (2R)-2-phosphoglycerate = (2R)-3-phosphoglycerate. Its pathway is carbohydrate degradation; glycolysis; pyruvate from D-glyceraldehyde 3-phosphate: step 3/5. Its function is as follows. Catalyzes the interconversion of 2-phosphoglycerate and 3-phosphoglycerate. The chain is 2,3-bisphosphoglycerate-dependent phosphoglycerate mutase from Blochmanniella pennsylvanica (strain BPEN).